Consider the following 283-residue polypeptide: Pantothenate synthetase (283 aa).

Position 30–37 (30–37) interacts with ATP; it reads MGFLHEGH. H37 functions as the Proton donor in the catalytic mechanism. (R)-pantoate is bound at residue Q61. Q61 is a binding site for beta-alanine. An ATP-binding site is contributed by 147-150; it reads GKKD. Residue Q153 coordinates (R)-pantoate. ATP contacts are provided by residues V176 and 184–187; that span reads MSSR.

The protein belongs to the pantothenate synthetase family. Homodimer.

It localises to the cytoplasm. The enzyme catalyses (R)-pantoate + beta-alanine + ATP = (R)-pantothenate + AMP + diphosphate + H(+). The protein operates within cofactor biosynthesis; (R)-pantothenate biosynthesis; (R)-pantothenate from (R)-pantoate and beta-alanine: step 1/1. Its function is as follows. Catalyzes the condensation of pantoate with beta-alanine in an ATP-dependent reaction via a pantoyl-adenylate intermediate. The sequence is that of Pantothenate synthetase from Trichlorobacter lovleyi (strain ATCC BAA-1151 / DSM 17278 / SZ) (Geobacter lovleyi).